The sequence spans 459 residues: MQARALLPATLAILATLAVLALAREPPAAPCPARCDVSRCPSPRCPGGYVPDLCNCCLVCAASEGEPCGRPLDSPCGDSLECVRGVCRCRWTHTVCGTDGHTYADVCALQAASRRALQVSGTPVRQLQKGACPSGLHQLTSPRYKFNFIADVVEKIAPAVVHIELFLRHPLFGRNVPLSSGSGFIMSEAGLIVTNAHVVSSSSTASGRQQLKVQLQNGDAYEATIQDIDKKSDIATIVIHPKKKLPVLLLGHSADLRPGEFVVAIGSPFALQNTVTTGIVSTAQRDGKELGLRDSDMDYIQTDAIINYGNSGGPLVNLDGEVIGINTLKVAAGISFAIPSDRITRFLSEFQNKHVKDWKKRFIGIRMRTITPSLVEELKAANPDFPAVSSGIYVQEVVPNSPSQRGGIQDGDIIVKVNGRPLADSSELQEAVLNESSLLLEVRRGNDDLLFSIIPEVVM.

Residues 1-23 (MQARALLPATLAILATLAVLALA) form the signal peptide. The 64-residue stretch at 27–90 (PAAPCPARCD…ECVRGVCRCR (64 aa)) folds into the IGFBP N-terminal domain. Disulfide bonds link Cys31/Cys54, Cys35/Cys56, Cys40/Cys57, Cys45/Cys60, Cys68/Cys82, Cys76/Cys87, Cys89/Cys107, and Cys96/Cys132. In terms of domain architecture, Kazal-like spans 76–134 (CGDSLECVRGVCRCRWTHTVCGTDGHTYADVCALQAASRRALQVSGTPVRQLQKGACPS). A serine protease region spans residues 181–347 (GSGFIMSEAG…IPSDRITRFL (167 aa)). Catalysis depends on charge relay system residues His197, Asp233, and Ser311. Residues 365 to 450 (IRMRTITPSL…EVRRGNDDLL (86 aa)) form the PDZ domain.

This sequence belongs to the peptidase S1C family. In terms of assembly, homotrimer. Interacts with MYH9. Interacts with TGFB1; the interaction inhibits TGFB-mediated signaling. Interacts with BMP4; the interaction inhibits BMP4-mediated signaling. Interacts with TGFB2 and GDF5. Highest level of isoform 1 in maternal part of the placenta, moderate level in heart, testis and ovary, low level in muscle and lung. High expression found in granulosa cells of the ovary. Expressed in bone matrix, particularly in articular chondrocytes. Very low level of isoform 2 expressed in placenta. Expressed in the bone matrix, particularly in articular chondrocytes.

The protein resides in the secreted. In terms of biological role, serine protease that cleaves beta-casein/CSN2 as well as several extracellular matrix (ECM) proteoglycans such as decorin/DCN, biglycan/BGN and fibronectin/FN1. Inhibits signaling mediated by TGF-beta family proteins possibly indirectly by degradation of these ECM proteoglycans. May act as a tumor suppressor. Negatively regulates, in vitro, trophoblast invasion during placental development and may be involved in the development of the placenta in vivo. May also have a role in ovarian development, granulosa cell differentiation and luteinization. In Mus musculus (Mouse), this protein is Serine protease HTRA3 (Htra3).